Here is a 275-residue protein sequence, read N- to C-terminus: Tryptophan synthase alpha chain (275 aa).

Residues glutamate 51 and aspartate 62 each act as proton acceptor in the active site.

It belongs to the TrpA family. In terms of assembly, tetramer of two alpha and two beta chains.

The catalysed reaction is (1S,2R)-1-C-(indol-3-yl)glycerol 3-phosphate + L-serine = D-glyceraldehyde 3-phosphate + L-tryptophan + H2O. It functions in the pathway amino-acid biosynthesis; L-tryptophan biosynthesis; L-tryptophan from chorismate: step 5/5. Its function is as follows. The alpha subunit is responsible for the aldol cleavage of indoleglycerol phosphate to indole and glyceraldehyde 3-phosphate. The polypeptide is Tryptophan synthase alpha chain (Methanopyrus kandleri (strain AV19 / DSM 6324 / JCM 9639 / NBRC 100938)).